The chain runs to 327 residues: Glycerol-3-phosphate dehydrogenase [NAD(P)+] (327 aa).

The NADPH site is built by Phe13, Arg34, and Lys107. Lys107 and Gly135 together coordinate sn-glycerol 3-phosphate. Position 139 (Ala139) interacts with NADPH. Lys190, Asp243, Ser253, Arg254, and Asn255 together coordinate sn-glycerol 3-phosphate. The active-site Proton acceptor is the Lys190. Arg254 contributes to the NADPH binding site. Val276 and Glu277 together coordinate NADPH.

This sequence belongs to the NAD-dependent glycerol-3-phosphate dehydrogenase family.

Its subcellular location is the cytoplasm. The catalysed reaction is sn-glycerol 3-phosphate + NAD(+) = dihydroxyacetone phosphate + NADH + H(+). The enzyme catalyses sn-glycerol 3-phosphate + NADP(+) = dihydroxyacetone phosphate + NADPH + H(+). It participates in membrane lipid metabolism; glycerophospholipid metabolism. Its function is as follows. Catalyzes the reduction of the glycolytic intermediate dihydroxyacetone phosphate (DHAP) to sn-glycerol 3-phosphate (G3P), the key precursor for phospholipid synthesis. In Rhizobium etli (strain CIAT 652), this protein is Glycerol-3-phosphate dehydrogenase [NAD(P)+].